A 391-amino-acid chain; its full sequence is Acetate kinase (391 aa).

N4 provides a ligand contact to Mg(2+). K11 contacts ATP. Residue R85 coordinates substrate. D142 (proton donor/acceptor) is an active-site residue. ATP-binding positions include 202–206 (HLGNG), 277–279 (DLR), and 325–329 (GIGEN). Residue E378 coordinates Mg(2+).

This sequence belongs to the acetokinase family. In terms of assembly, homodimer. Requires Mg(2+) as cofactor. The cofactor is Mn(2+).

The protein localises to the cytoplasm. It carries out the reaction acetate + ATP = acetyl phosphate + ADP. The protein operates within metabolic intermediate biosynthesis; acetyl-CoA biosynthesis; acetyl-CoA from acetate: step 1/2. In terms of biological role, catalyzes the formation of acetyl phosphate from acetate and ATP. Can also catalyze the reverse reaction. The protein is Acetate kinase of Halalkalibacterium halodurans (strain ATCC BAA-125 / DSM 18197 / FERM 7344 / JCM 9153 / C-125) (Bacillus halodurans).